The following is a 365-amino-acid chain: P43 5S RNA-binding protein (365 aa).

9 C2H2-type zinc fingers span residues 15 to 39 (LRCPAAGCKAFYRKEGKLQDHMAGH), 45 to 69 (WKCGIKDCDKVFARKRQILKHVKRH), 75 to 100 (LSCPTAGCKMTFSTKKSLSRHKLYKH), 106 to 130 (LKCFVPGCKRSFRKKRALRRHLSVH), 136 to 160 (SVCDVPGCSWKSSSVAKLVAHQKRH), 163 to 187 (YRCSYEGCQTVSPTWTALQTHVKKH), 191 to 213 (LQCAACKKPFKKASALRRHKATH), 220 to 245 (LPCPRQDCDKTFSSVFNLTHHVRKLH), and 251 to 275 (HRCPHSGCTRSFAMRESLLRHLVVH).

The 42S RNP particle comprises four subunits each of which contains one molecule of 5S RNA, three molecules of tRNA, two molecules of p50 (EF1-alpha) and one molecule of the 5S RNA binding protein 43.

In terms of biological role, p43 is a 5S RNA binding protein which is a major constituent of oocytes and comprises part of a 42S ribonucleoprotein storage particle. This Xenopus laevis (African clawed frog) protein is P43 5S RNA-binding protein.